Consider the following 1463-residue polypeptide: Secretory phospholipase A2 receptor (1463 aa).

A signal peptide spans 1 to 20 (MLLSPSLLLLLLLGAPRGCA). The Extracellular portion of the chain corresponds to 21–1397 (EGVAAALTPE…ALPEKGPSHS (1377 aa)). A Ricin B-type lectin domain is found at 38–161 (KGIFVIQSES…GSGGGDICEY (124 aa)). 14 disulfide bridges follow: Cys-51-Cys-64, Cys-89-Cys-106, Cys-178-Cys-204, Cys-192-Cys-219, Cys-260-Cys-354, Cys-330-Cys-346, Cys-406-Cys-501, Cys-478-Cys-493, Cys-617-Cys-634, Cys-699-Cys-796, Cys-774-Cys-788, Cys-840-Cys-937, Cys-914-Cys-929, and Cys-1067-Cys-1087. The N-linked (GlcNAc...) asparagine glycan is linked to Asn-93. The 49-residue stretch at 173–221 (THGMPCMFPFQYNHQWHHECTREGREDDLLWCATTSRYERDEKWGFCPD) folds into the Fibronectin type-II domain. C-type lectin domains are found at residues 238-355 (NSHI…YICK), 385-502 (YNRN…YICK), 522-643 (HGGF…MSLC), 673-797 (GLAS…WICK), 819-938 (YQDA…SICK), 965-1096 (FNYK…GFVC), 1121-1232 (YGNR…GAIC), and 1257-1378 (FKSN…FICK). An N-linked (GlcNAc...) asparagine glycan is attached at Asn-454. Residue Asn-1123 is glycosylated (N-linked (GlcNAc...) asparagine). Intrachain disulfides connect Cys-1209–Cys-1223, Cys-1280–Cys-1377, and Cys-1354–Cys-1369. The helical transmembrane segment at 1398–1418 (IIPLAVVLTLIVIVAICTLSF) threads the bilayer. Over 1419-1463 (CIYKHNGGFFRRLAGFRNPYYPATNFSTVYLEENILISDLEKSDQ) the chain is Cytoplasmic. The short motif at 1436–1442 (NPYYPAT) is the Endocytosis signal element.

In terms of assembly, interacts with sPLA2-IB/PLA2G1B; this interaction mediates intracellular signaling as well as clearance of extracellular sPLA2-IB/PLA2G1B via endocytotic pathway. Interacts with sPLA2-X/PLA2G10; this interaction mediates sPLA2-X/PLA2G10 clearance and inactivation. In terms of processing, the secretory phospholipase A2 receptor form may be produced by the action of metalloproteinases. It contains all extracellular domains and only lacks transmembrane and cytosolic regions. It is however unclear whether this form is produced by proteolytic cleavage as suggested by some experiments, or by alternative splicing, as in the case of isoform 2 that shares all characteristics of secretory phospholipase A2 receptor form. Expressed in podocytes (at protein level). Present in lung macrophage (at protein level). Highly expressed in kidney. Also expressed in pancreas, amnion, choriodecidua and placenta. Isoform 2 is expressed at much lower level.

The protein localises to the cell membrane. Its subcellular location is the secreted. Receptor for secretory phospholipase A2 (sPLA2). Acts as a receptor for phospholipase sPLA2-IB/PLA2G1B but not sPLA2-IIA/PLA2G2A. Also able to bind to snake PA2-like toxins. Although its precise function remains unclear, binding of sPLA2 to its receptor participates in both positive and negative regulation of sPLA2 functions as well as clearance of sPLA2. Binding of sPLA2-IB/PLA2G1B induces various effects depending on the cell type, such as activation of the mitogen-activated protein kinase (MAPK) cascade to induce cell proliferation, the production of lipid mediators, selective release of arachidonic acid in bone marrow-derived mast cells. In neutrophils, binding of sPLA2-IB/PLA2G1B can activate p38 MAPK to stimulate elastase release and cell adhesion. May be involved in responses in pro-inflammatory cytokine productions during endotoxic shock. Also has endocytic properties and rapidly internalizes sPLA2 ligands, which is particularly important for the clearance of extracellular sPLA2s to protect their potent enzymatic activities. The soluble secretory phospholipase A2 receptor form is circulating and acts as a negative regulator of sPLA2 functions by blocking the biological functions of sPLA2-IB/PLA2G1B. In podocytes, binding of sPLA2-IB/PLA2G1B can regulate podocyte survival and glomerular homeostasis. The chain is Secretory phospholipase A2 receptor (PLA2R1) from Homo sapiens (Human).